The primary structure comprises 187 residues: 5-formyltetrahydrofolate cyclo-ligase (187 aa).

ATP contacts are provided by residues 6–10 (RQQIR), 139–146 (GMGGGFYD), and Asp178.

This sequence belongs to the 5-formyltetrahydrofolate cyclo-ligase family.

The catalysed reaction is (6S)-5-formyl-5,6,7,8-tetrahydrofolate + ATP = (6R)-5,10-methenyltetrahydrofolate + ADP + phosphate. Its pathway is one-carbon metabolism; tetrahydrofolate interconversion. Involved in the removal of 5-formyltetrahydrofolate. In vitro, it is a potent inhibitor of various folate-dependent enzymes in the C1 metabolism network and in vivo it might function as a folate storage. 5-formyltetrahydrofolate is also used as an antifolate rescue agent in cancer chemotherapy. Catalyzes the irreversible ATP-dependent transformation of 5-formyltetrahydrofolate (5-CHO-THF) to form 5,10-methenyltetrahydrofolate (5,10-CH=THF). The reverse reaction is catalyzed by the serine hydroxymethyltransferase GlyA (SHMT). This Haemophilus influenzae (strain ATCC 51907 / DSM 11121 / KW20 / Rd) protein is 5-formyltetrahydrofolate cyclo-ligase.